Reading from the N-terminus, the 1806-residue chain is uncharacterized protein (1806 aa).

Disordered stretches follow at residues 38–131 (EASG…SPLF) and 158–282 (KAVS…KPRP). Residues 51–70 (KSPLRSPARLLPLPRLAPKP) are compositionally biased toward low complexity. A phosphoserine mark is found at serine 52, serine 56, serine 79, serine 87, serine 88, serine 92, and serine 128. Positions 82 to 100 (PSLRPSSTGPSPSGGLSEE) are enriched in low complexity. Over residues 226-236 (DTARPLVEPRP) the composition is skewed to basic and acidic residues. Phosphoserine occurs at positions 244 and 284. Disordered stretches follow at residues 299–320 (RKVA…ERPR), 355–431 (KEKM…GGEW), 456–604 (SESP…PEDD), and 627–696 (QSGR…ELRP). Serine 366 is modified (phosphoserine). A Phosphothreonine modification is found at threonine 378. A Phosphoserine modification is found at serine 384. The segment covering 386 to 400 (WEEKAKLDPEPEKAA) has biased composition (basic and acidic residues). At serine 404 the chain carries Phosphoserine. Basic and acidic residues predominate over residues 412 to 422 (ELAEVKSRVAD). The segment covering 456–470 (SESPLATPASPSAAP) has biased composition (low complexity). Serine 458 and serine 508 each carry phosphoserine. The segment covering 514–523 (LFSSSASSNE) has biased composition (polar residues). Basic and acidic residues-rich tracts occupy residues 524-549 (VKYE…EGHS) and 564-573 (TLRDKSRQTE). The residue at position 600 (threonine 600) is a Phosphothreonine. Composition is skewed to basic and acidic residues over residues 641–652 (AHARVSEPRPRP) and 661–674 (DPPD…ENSR). Position 749 is a phosphoserine (serine 749). Disordered stretches follow at residues 860 to 901 (QHEG…QART), 969 to 989 (SPHV…ALRK), and 1000 to 1019 (QEVN…KQGS). The segment covering 889-900 (RATNGPSDSQAR) has biased composition (polar residues). Phosphoserine is present on residues serine 969 and serine 981. The segment covering 969-978 (SPHVGHRRTD) has biased composition (basic and acidic residues). Threonine 1059 carries the post-translational modification Phosphothreonine. Serine 1063 and serine 1154 each carry phosphoserine. The disordered stretch occupies residues 1134-1178 (RGSEDGPRPQSNWKESANKMSPSGGAPQTTPTLRSRPKDLPVRRK). Residues 1142 to 1166 (PQSNWKESANKMSPSGGAPQTTPTL) show a composition bias toward polar residues. At threonine 1163 the chain carries Phosphothreonine. The span at 1169–1178 (RPKDLPVRRK) shows a compositional bias: basic and acidic residues. Phosphothreonine is present on residues threonine 1179 and threonine 1185. Disordered regions lie at residues 1216–1265 (PGEA…PASS) and 1291–1493 (KSSP…VASV). Serine 1224 carries the phosphoserine modification. Position 1226 is a phosphothreonine (threonine 1226). Basic and acidic residues-rich tracts occupy residues 1244 to 1254 (EQRRRSLKEMP) and 1317 to 1331 (DPRK…DRKA). Serine 1366 carries the post-translational modification Phosphoserine. Basic and acidic residues-rich tracts occupy residues 1393–1410 (DHPR…RAYS) and 1426–1437 (HEARERRREQPK). Serine 1441 carries the phosphoserine modification. A compositionally biased stretch (basic and acidic residues) spans 1462-1483 (DSHKVLPRDLEKEDAPQEKERP). Residues serine 1488 and serine 1506 each carry the phosphoserine modification. Disordered regions lie at residues 1512–1627 (QLKQ…KRVD) and 1642–1806 (ALKT…ENQV). Positions 1522–1531 (TEPKDTDTLV) are enriched in basic and acidic residues. Over residues 1537–1568 (QYGTWTEQCQSGESLATESPDSSATSTRKQPP) the composition is skewed to polar residues. Phosphoserine is present on residues serine 1555 and serine 1662. Positions 1649 to 1666 (LSKRSRRRAPISHSLRRS) are enriched in basic residues. 2 stretches are compositionally biased toward basic and acidic residues: residues 1667 to 1677 (RFSESESRSPL) and 1689 to 1714 (DSTE…ERTP). Phosphoserine occurs at positions 1701, 1757, 1760, and 1786. Over residues 1753-1764 (PQPKSPKSPFQP) the composition is skewed to low complexity.

This is an uncharacterized protein from Homo sapiens (Human).